We begin with the raw amino-acid sequence, 393 residues long: Phosphoglycerate kinase (393 aa).

Residues 22 to 24 (DFN), Arg37, 60 to 63 (HLGR), Arg119, and Arg152 contribute to the substrate site. ATP-binding positions include Lys202, Gly293, Glu324, and 350-353 (GGDS).

This sequence belongs to the phosphoglycerate kinase family. As to quaternary structure, monomer.

The protein resides in the cytoplasm. The catalysed reaction is (2R)-3-phosphoglycerate + ATP = (2R)-3-phospho-glyceroyl phosphate + ADP. Its pathway is carbohydrate degradation; glycolysis; pyruvate from D-glyceraldehyde 3-phosphate: step 2/5. This chain is Phosphoglycerate kinase, found in Borreliella burgdorferi (strain ZS7) (Borrelia burgdorferi).